A 459-amino-acid polypeptide reads, in one-letter code: Nitrogenase molybdenum-iron protein beta chain (459 aa).

Cysteine 21, cysteine 46, cysteine 104, and serine 143 together coordinate [8Fe-7S] cluster.

Belongs to the NifD/NifK/NifE/NifN family. In terms of assembly, tetramer of two alpha and two beta chains. Forms complex with the iron protein (nitrogenase component 2). It depends on [8Fe-7S] cluster as a cofactor.

The enzyme catalyses N2 + 8 reduced [2Fe-2S]-[ferredoxin] + 16 ATP + 16 H2O = H2 + 8 oxidized [2Fe-2S]-[ferredoxin] + 2 NH4(+) + 16 ADP + 16 phosphate + 6 H(+). Its function is as follows. This molybdenum-iron protein is part of the nitrogenase complex that catalyzes the key enzymatic reactions in nitrogen fixation. The protein is Nitrogenase molybdenum-iron protein beta chain (nifK) of Methanothermobacter thermautotrophicus (strain ATCC 29096 / DSM 1053 / JCM 10044 / NBRC 100330 / Delta H) (Methanobacterium thermoautotrophicum).